Here is a 1232-residue protein sequence, read N- to C-terminus: Anion exchange protein 3 (1232 aa).

The segment covering 1 to 11 (MANGVIPPPGG) has biased composition (pro residues). 2 disordered regions span residues 1 to 316 (MANG…KLDR) and 429 to 499 (NDDK…DSHR). Residues 1-708 (MANGVIPPPG…DLRDALHSQC (708 aa)) are Cytoplasmic-facing. Residues 58-75 (DPEKPSRSYSERDFEFHR) show a composition bias toward basic and acidic residues. Composition is skewed to basic residues over residues 76 to 97 (HTSHHTHHPLSARLPPPHKLRR) and 104 to 113 (RHTRRKRKKE). A compositionally biased stretch (acidic residues) spans 134 to 152 (VDEEEEEEEEEEGESEAEP). Residues Ser167, Ser170, Ser175, and Ser198 each carry the phosphoserine modification. The segment covering 267 to 279 (DDMKSHRLEDNPG) has biased composition (basic and acidic residues). A compositionally biased stretch (basic residues) spans 280–289 (VRRHLVKKPS). Position 295 is an omega-N-methylarginine (Arg295). Over residues 305 to 316 (LRRKKKKKKLDR) the composition is skewed to basic residues. Positions 440–450 (NPSSSSMNSVL) are enriched in polar residues. A compositionally biased stretch (basic and acidic residues) spans 481-499 (HDPDAKEKPLHMPGGDSHR). Helical transmembrane passes span 709–731 (VAAVLFIYFAALSPAITFGGLLG), 737–774 (LMGVSELIVSTAVLGVLFSLLGAQPLLVVGFSGPLLVF), 794–816 (VWVGLWLVVFVLALVAAEGSFLV), 826–847 (IFAFLISLIFIYETFYKLYKVF), and 893–910 (ALLSLILMLGTFFIAFFL). A membrane (anion exchange) region spans residues 709 to 1232 (VAAVLFIYFA…DEYNELHMPV (524 aa)). Over 911-925 (RKFRNSRFLGGKARR) the chain is Cytoplasmic. The next 5 membrane-spanning stretches (helical) occupy residues 926-946 (IIGDFGIPISILVMVLVDYSI), 980-1002 (PFPPWMMVAAAVPALLVLILIFM), 1028-1049 (LLLIGSLGGLCGLFGLPWLTAA), 1083-1128 (VTGV…IQLS), and 1155-1191 (MHLFTCIQLGCIALLWVVKSTAASLAFPFLLLLTVPL). The S-palmitoyl cysteine moiety is linked to residue Cys1165.

The protein belongs to the anion exchanger (TC 2.A.31) family.

It localises to the cell membrane. The enzyme catalyses hydrogencarbonate(in) + chloride(out) = hydrogencarbonate(out) + chloride(in). Its function is as follows. Sodium-independent anion exchanger which mediates the electroneutral exchange of chloride for bicarbonate ions across the cell membrane. May be involved in the regulation of intracellular pH, and the modulation of cardiac action potential. The sequence is that of Anion exchange protein 3 (SLC4A3) from Plecturocebus moloch (Dusky titi monkey).